We begin with the raw amino-acid sequence, 380 residues long: Cytochrome b (380 aa).

4 consecutive transmembrane segments (helical) span residues Phe-34–Thr-54, Trp-78–Ile-99, Trp-114–Leu-134, and Phe-179–Thr-199. Heme b is bound by residues His-84 and His-98. Heme b-binding residues include His-183 and His-197. His-202 is a binding site for a ubiquinone. Transmembrane regions (helical) follow at residues Leu-227–Ser-247, Leu-289–His-309, Leu-321–Ser-341, and Phe-348–Pro-368.

This sequence belongs to the cytochrome b family. As to quaternary structure, the cytochrome bc1 complex contains 11 subunits: 3 respiratory subunits (MT-CYB, CYC1 and UQCRFS1), 2 core proteins (UQCRC1 and UQCRC2) and 6 low-molecular weight proteins (UQCRH/QCR6, UQCRB/QCR7, UQCRQ/QCR8, UQCR10/QCR9, UQCR11/QCR10 and a cleavage product of UQCRFS1). This cytochrome bc1 complex then forms a dimer. Requires heme b as cofactor.

It is found in the mitochondrion inner membrane. Component of the ubiquinol-cytochrome c reductase complex (complex III or cytochrome b-c1 complex) that is part of the mitochondrial respiratory chain. The b-c1 complex mediates electron transfer from ubiquinol to cytochrome c. Contributes to the generation of a proton gradient across the mitochondrial membrane that is then used for ATP synthesis. This is Cytochrome b (MT-CYB) from Cepphus grylle (Black guillemot).